Reading from the N-terminus, the 601-residue chain is Elongation factor 4 (601 aa).

Residues 7–189 (DNIRNFSIVA…AIVKRLPPPK (183 aa)) enclose the tr-type G domain. GTP contacts are provided by residues 19 to 24 (DHGKST) and 136 to 139 (NKVD).

This sequence belongs to the TRAFAC class translation factor GTPase superfamily. Classic translation factor GTPase family. LepA subfamily.

Its subcellular location is the cell inner membrane. The catalysed reaction is GTP + H2O = GDP + phosphate + H(+). Functionally, required for accurate and efficient protein synthesis under certain stress conditions. May act as a fidelity factor of the translation reaction, by catalyzing a one-codon backward translocation of tRNAs on improperly translocated ribosomes. Back-translocation proceeds from a post-translocation (POST) complex to a pre-translocation (PRE) complex, thus giving elongation factor G a second chance to translocate the tRNAs correctly. Binds to ribosomes in a GTP-dependent manner. This chain is Elongation factor 4, found in Methylorubrum populi (strain ATCC BAA-705 / NCIMB 13946 / BJ001) (Methylobacterium populi).